Consider the following 231-residue polypeptide: MNKLTVRNFIVGLLIVFSLNSFSSPPSISNSSSNSIDENSPINTFKISPDNQTSKKSDLATEEPKGCKYWLSLFKPVCHRLHQVWTEGHTDLYLSGYAWHNRFTYSAERIREKKYNELAWGGGLGKGFFDEKGNWHGLYAFAFLDSHRNVEPTAGYAYLRVANITKEFKAGLGFSVLVTARPDIFHNIPFPGAVPWAGIFYKKLSVKAAYIPGSSTNGNVLYVVGTYSFDK.

The first 23 residues, 1 to 23 (MNKLTVRNFIVGLLIVFSLNSFS), serve as a signal peptide directing secretion. Positions 24-43 (SPPSISNSSSNSIDENSPIN) are enriched in low complexity. The segment at 24–59 (SPPSISNSSSNSIDENSPINTFKISPDNQTSKKSDL) is disordered. Catalysis depends on residues H100, D145, and S146.

It belongs to the lipid A palmitoyltransferase family. In terms of assembly, homodimer.

The protein resides in the cell outer membrane. The enzyme catalyses a lipid A + a 1,2-diacyl-sn-glycero-3-phosphocholine = a hepta-acyl lipid A + a 2-acyl-sn-glycero-3-phosphocholine. It catalyses the reaction a lipid IVA + a 1,2-diacyl-sn-glycero-3-phosphocholine = a lipid IVB + a 2-acyl-sn-glycero-3-phosphocholine. The catalysed reaction is a lipid IIA + a 1,2-diacyl-sn-glycero-3-phosphocholine = a lipid IIB + a 2-acyl-sn-glycero-3-phosphocholine. In terms of biological role, transfers a fatty acid residue from the sn-1 position of a phospholipid to the N-linked hydroxyfatty acid chain on the proximal unit of lipid A or its precursors. In Legionella longbeachae serogroup 1 (strain NSW150), this protein is Lipid A acyltransferase PagP.